The chain runs to 267 residues: Thiamine pyrophosphokinase 1 (267 aa).

Belongs to the thiamine pyrophosphokinase family. As to expression, expressed in roots, leaves and flowers.

It is found in the cytoplasm. Its subcellular location is the cytosol. The catalysed reaction is thiamine + ATP = thiamine diphosphate + AMP + H(+). It functions in the pathway cofactor biosynthesis; thiamine diphosphate biosynthesis; thiamine diphosphate from thiamine: step 1/1. Functionally, catalyzes the phosphorylation of thiamine to thiamine pyrophosphate (TPP). TPP is an active cofactor for enzymes involved in glycolysis and energy production. Plant leaves require high levels of TPP for photosynthesis and carbohydrate metabolism. The protein is Thiamine pyrophosphokinase 1 of Arabidopsis thaliana (Mouse-ear cress).